The primary structure comprises 415 residues: Multifunctional CCA protein (415 aa).

Residues G8 and R11 each contribute to the ATP site. The CTP site is built by G8 and R11. Mg(2+) is bound by residues D21 and D23. Residues R91, R137, and R140 each contribute to the ATP site. The CTP site is built by R91, R137, and R140. The HD domain maps to 228-329; the sequence is TGIHTLMTLA…VGLFDSIDAW (102 aa).

Belongs to the tRNA nucleotidyltransferase/poly(A) polymerase family. Bacterial CCA-adding enzyme type 1 subfamily. Monomer. Can also form homodimers and oligomers. The cofactor is Mg(2+). It depends on Ni(2+) as a cofactor.

The enzyme catalyses a tRNA precursor + 2 CTP + ATP = a tRNA with a 3' CCA end + 3 diphosphate. It catalyses the reaction a tRNA with a 3' CCA end + 2 CTP + ATP = a tRNA with a 3' CCACCA end + 3 diphosphate. Catalyzes the addition and repair of the essential 3'-terminal CCA sequence in tRNAs without using a nucleic acid template. Adds these three nucleotides in the order of C, C, and A to the tRNA nucleotide-73, using CTP and ATP as substrates and producing inorganic pyrophosphate. tRNA 3'-terminal CCA addition is required both for tRNA processing and repair. Also involved in tRNA surveillance by mediating tandem CCA addition to generate a CCACCA at the 3' terminus of unstable tRNAs. While stable tRNAs receive only 3'-terminal CCA, unstable tRNAs are marked with CCACCA and rapidly degraded. The chain is Multifunctional CCA protein from Cronobacter sakazakii (strain ATCC BAA-894) (Enterobacter sakazakii).